The primary structure comprises 609 residues: ATP-dependent lipid A-core flippase (609 aa).

6 helical membrane passes run 47–67, 88–108, 167–187, 190–210, 279–299, and 305–325; these read LLAA…IYLI, ILML…VGSF, AIIT…VMFV, WQLS…ISII, VIQI…AIFG, and GSSW…AAIL. Positions 47 to 340 constitute an ABC transmembrane type-1 domain; it reads LLAAIGSIFF…LTKVNVVIQK (294 aa). One can recognise an ABC transporter domain in the interval 372–606; sequence VTIKDLSFAF…GGLYTRLYQS (235 aa). Residue 404 to 411 participates in ATP binding; sequence GKSGSGKT.

Belongs to the ABC transporter superfamily. Lipid exporter (TC 3.A.1.106) family. As to quaternary structure, homodimer.

It localises to the cell inner membrane. The catalysed reaction is ATP + H2O + lipid A-core oligosaccharideSide 1 = ADP + phosphate + lipid A-core oligosaccharideSide 2.. Involved in lipopolysaccharide (LPS) biosynthesis. Translocates lipid A-core from the inner to the outer leaflet of the inner membrane. Transmembrane domains (TMD) form a pore in the inner membrane and the ATP-binding domain (NBD) is responsible for energy generation. This Francisella tularensis subsp. tularensis (strain FSC 198) protein is ATP-dependent lipid A-core flippase.